A 396-amino-acid polypeptide reads, in one-letter code: MRGPAMRLPPRIALSALARGPSCILGSGAATRKDWQTRNRRGFSDFNIEPLPDSDLEESSPWTSRNRSEPTRHIACKKAARNLVRDLLEHQNPSRQIILECNPGPGILTGALLKAGARVVAFESEKTFIPHLEPLQRNMDGELQVVHCDFFKMDPRYQEVVRPDVSSQAIFQNLGIKAVPWSAGVPIKVFGILPYKHERRILWKILFDLYSCESIYRYGRVELNMFVSEKEFRKLIATPKRPDLYQVMAVLWQVACDVKFLHMEPWSSFSVHTENGHLEKSKHGESVNLLKQNLYLVRMTPRRTLFTENLSPLNYDIFFHLVKHCFGKRNAPIIRHLRSLSTVDPINILRQIRKNPGDTAARMYPHDFKKLFETIEQSEDSVFKWIYDYCPEDMEF.

Residues 1–43 (MRGPAMRLPPRIALSALARGPSCILGSGAATRKDWQTRNRRGF) constitute a mitochondrion transit peptide. The tract at residues 43–71 (FSDFNIEPLPDSDLEESSPWTSRNRSEPT) is disordered. Residues isoleucine 74, glutamate 123, and aspartate 149 each contribute to the S-adenosyl-L-methionine site. The tract at residues 328-329 (KR) is DNA-binding.

The protein belongs to the class I-like SAM-binding methyltransferase superfamily. rRNA adenine N(6)-methyltransferase family. KsgA subfamily. In terms of assembly, homodimer. Component of the mitochondrial transcription initiation complex, composed at least of TFB2M, TFAM and POLRMT. In this complex TFAM recruits POLRMT to the promoter whereas TFB2M induces structural changes in POLRMT to enable promoter opening and trapping of the DNA non-template strand. Interacts with mitochondrial RNA polymerase POLRMT. Interacts with TFAM. In terms of tissue distribution, ubiquitously expressed.

It is found in the mitochondrion. The enzyme catalyses adenosine in rRNA + S-adenosyl-L-methionine = N(6)-methyladenosine in rRNA + S-adenosyl-L-homocysteine + H(+). Its function is as follows. S-adenosyl-L-methionine-dependent rRNA methyltransferase which may methylate two specific adjacent adenosines in the loop of a conserved hairpin near the 3'-end of 12S mitochondrial rRNA. Component of the mitochondrial transcription initiation complex, composed at least of TFB2M, TFAM and POLRMT that is required for basal transcription of mitochondrial DNA. In this complex, TFAM recruits POLRMT to a specific promoter whereas TFB2M induces structural changes in POLRMT to enable promoter opening and trapping of the DNA non-template strand. Stimulates transcription independently of the methyltransferase activity. In Mus musculus (Mouse), this protein is Dimethyladenosine transferase 2, mitochondrial.